A 458-amino-acid chain; its full sequence is MAKTNGFMGHDMLAPFTAAWMIDMGPLVIDKAEGSYVYGVNGKKYLDSLSGLWCTVLGGSEPRLIEAASKQLNKSAFYHSFWNRTTKPSLDLAKELINMFTANKMGKVFFTSSGSEANDTQVKLVWYYNNAIGRPNKKKIISRKNAYHGSTYMTAGLSGLPSLHLKFDLPPPYILHTDCPHYWNYHLPGETEEEYSTRLANNLENLILKEGPETVAAFIAEPVMGGAGVIIPPATYFEKIQAVLKKYDILFIADEVICGFGRLGTMFGCDKYNIKPDLVSIAKALSGGYIPIGAVLVSEEISKVIMSQSNQLGVFCHGFTYSGHPVACAVALEALKIYKEKNITEVVNKLSPKLQEGLKAFIDSPIIGEIRGTGLVLSTEFVDNKSPNDPFPPEWGVGTYFGSQCQKHGMLVSFSGDHVNMAPPFTLSLEELDEMISIYGKALKDTEKRVEELKSQKK.

Residue 114-115 coordinates pyridoxal 5'-phosphate; sequence GS. Tyrosine 147 is a substrate binding site. Aspartate 254 is a binding site for pyridoxal 5'-phosphate. Residue lysine 283 participates in substrate binding. Lysine 283 bears the N6-(pyridoxal phosphate)lysine mark.

The protein belongs to the class-III pyridoxal-phosphate-dependent aminotransferase family. Expressed in leaves, roots, stems, flowers and fruits. Expressed in carpels, but not in stamens.

The protein localises to the cytoplasm. The enzyme catalyses 4-aminobutanoate + pyruvate = succinate semialdehyde + L-alanine. It carries out the reaction 4-aminobutanoate + glyoxylate = succinate semialdehyde + glycine. In terms of biological role, transaminase that degrades gamma-amino butyric acid (GABA) and uses pyruvate or glyoxylate as amino-group acceptor. Cannot use beta-alanine, ornithine, acetylornithine, serine, glycine, asparagine, glutamine, glutamate, valine, leucine, isoleucine, methionine, phenylalanine, histidine, lysine, arginine, aspartate, threonine, tyrosine, tryptophan, proline, or cysteine as amino donors. May be responsible for establishing the GABA gradient in the carpel. The chain is Gamma aminobutyrate transaminase 2 (GABA-TP2) from Solanum lycopersicum (Tomato).